Consider the following 112-residue polypeptide: Protein lin-52 homolog (112 aa).

Belongs to the lin-52 family. As to quaternary structure, component of the DREAM complex.

The sequence is that of Protein lin-52 homolog (LIN52) from Gallus gallus (Chicken).